Here is a 166-residue protein sequence, read N- to C-terminus: Large ribosomal subunit protein uL10 (166 aa).

Belongs to the universal ribosomal protein uL10 family. In terms of assembly, part of the ribosomal stalk of the 50S ribosomal subunit. The N-terminus interacts with L11 and the large rRNA to form the base of the stalk. The C-terminus forms an elongated spine to which L12 dimers bind in a sequential fashion forming a multimeric L10(L12)X complex.

Functionally, forms part of the ribosomal stalk, playing a central role in the interaction of the ribosome with GTP-bound translation factors. This is Large ribosomal subunit protein uL10 from Pseudomonas fluorescens (strain ATCC BAA-477 / NRRL B-23932 / Pf-5).